The primary structure comprises 1130 residues: Alpha-mannosidase 2 (1130 aa).

Residues 1–14 (MRTRVLRCRPFSTR) are Cytoplasmic-facing. A helical; Signal-anchor for type II membrane protein transmembrane segment spans residues 15–35 (ILLLLLFVLAFGVYCYFYNAS). Residues 36–1130 (PQNYNKPRIS…MEVKTYKIRF (1095 aa)) are Lumenal-facing. N117 carries N-linked (GlcNAc...) asparagine glycosylation. Residues H133 and D135 each coordinate Zn(2+). The N-linked (GlcNAc...) asparagine glycan is linked to N166. Zn(2+)-binding residues include D247 and H527. The Nucleophile role is filled by D247. N-linked (GlcNAc...) asparagine glycans are attached at residues N622, N683, N1056, and N1095.

It belongs to the glycosyl hydrolase 38 family. As to quaternary structure, homodimer; disulfide-linked. It depends on Zn(2+) as a cofactor. Post-translationally, N-glycosylated.

The protein localises to the microsome membrane. It localises to the golgi apparatus membrane. The catalysed reaction is N(4)-{beta-D-GlcNAc-(1-&gt;2)-alpha-D-Man-(1-&gt;3)-[alpha-D-Man-(1-&gt;3)-[alpha-D-Man-(1-&gt;6)]-alpha-D-Man-(1-&gt;6)]-beta-D-Man-(1-&gt;4)-beta-D-GlcNAc-(1-&gt;4)-beta-D-GlcNAc}-L-asparaginyl-[protein] + 2 H2O = 2 alpha-D-mannopyranose + an N(4)-{beta-D-GlcNAc-(1-&gt;2)-alpha-D-Man-(1-&gt;3)-[alpha-D-Man-(1-&gt;6)]-beta-D-Man-(1-&gt;4)-beta-D-GlcNAc-(1-&gt;4)-beta-D-GlcNAc}-L-asparaginyl-[protein]. It participates in protein modification; protein glycosylation. Inhibited by swainsonine. In terms of biological role, catalyzes the first committed step in the biosynthesis of complex N-glycans. It controls conversion of high mannose to complex N-glycans; the final hydrolytic step in the N-glycan maturation pathway. The polypeptide is Alpha-mannosidase 2 (Spodoptera frugiperda (Fall armyworm)).